The primary structure comprises 172 residues: Shikimate kinase (172 aa).

14 to 19 is an ATP binding site; that stretch reads GAGKTT. Residue Thr18 participates in Mg(2+) binding. Asp36, Arg60, and Gly82 together coordinate substrate. Arg119 is an ATP binding site. Arg137 is a substrate binding site.

It belongs to the shikimate kinase family. In terms of assembly, monomer. Mg(2+) is required as a cofactor.

Its subcellular location is the cytoplasm. It carries out the reaction shikimate + ATP = 3-phosphoshikimate + ADP + H(+). It participates in metabolic intermediate biosynthesis; chorismate biosynthesis; chorismate from D-erythrose 4-phosphate and phosphoenolpyruvate: step 5/7. Functionally, catalyzes the specific phosphorylation of the 3-hydroxyl group of shikimic acid using ATP as a cosubstrate. This Thermobifida fusca (strain YX) protein is Shikimate kinase.